The sequence spans 618 residues: 1-deoxy-D-xylulose-5-phosphate synthase (618 aa).

Residues histidine 70 and 111-113 (GHS) each bind thiamine diphosphate. Aspartate 142 contacts Mg(2+). Residues 143-144 (GS), asparagine 171, tyrosine 278, and glutamate 360 contribute to the thiamine diphosphate site. Asparagine 171 provides a ligand contact to Mg(2+).

The protein belongs to the transketolase family. DXPS subfamily. Homodimer. Mg(2+) serves as cofactor. Thiamine diphosphate is required as a cofactor.

The enzyme catalyses D-glyceraldehyde 3-phosphate + pyruvate + H(+) = 1-deoxy-D-xylulose 5-phosphate + CO2. It functions in the pathway metabolic intermediate biosynthesis; 1-deoxy-D-xylulose 5-phosphate biosynthesis; 1-deoxy-D-xylulose 5-phosphate from D-glyceraldehyde 3-phosphate and pyruvate: step 1/1. In terms of biological role, catalyzes the acyloin condensation reaction between C atoms 2 and 3 of pyruvate and glyceraldehyde 3-phosphate to yield 1-deoxy-D-xylulose-5-phosphate (DXP). This chain is 1-deoxy-D-xylulose-5-phosphate synthase, found in Helicobacter pylori (strain ATCC 700392 / 26695) (Campylobacter pylori).